A 308-amino-acid polypeptide reads, in one-letter code: Methionyl-tRNA formyltransferase (308 aa).

Residue 110–113 (SLLP) coordinates (6S)-5,6,7,8-tetrahydrofolate.

It belongs to the Fmt family.

The catalysed reaction is L-methionyl-tRNA(fMet) + (6R)-10-formyltetrahydrofolate = N-formyl-L-methionyl-tRNA(fMet) + (6S)-5,6,7,8-tetrahydrofolate + H(+). In terms of biological role, attaches a formyl group to the free amino group of methionyl-tRNA(fMet). The formyl group appears to play a dual role in the initiator identity of N-formylmethionyl-tRNA by promoting its recognition by IF2 and preventing the misappropriation of this tRNA by the elongation apparatus. The protein is Methionyl-tRNA formyltransferase of Mycobacterium sp. (strain KMS).